The primary structure comprises 106 residues: MVTTNRLVLSGTVCKTPVRKVSPSGIPHCQFVLEHRSTQQEAGFSRQTWCRMPIIVSGQQSQALTHSITVGSQLTVEGFISCHQGRNGLNKLVLHAEQIEFIDSGD.

The SSB domain occupies 4 to 103 (TNRLVLSGTV…LHAEQIEFID (100 aa)).

Belongs to the PriB family. In terms of assembly, homodimer. Interacts with PriA and DnaT. Component of the replication restart primosome. Primosome assembly occurs via a 'hand-off' mechanism. PriA binds to replication forks, subsequently PriB then DnaT bind; DnaT then displaces ssDNA to generate the helicase loading substrate.

Involved in the restart of stalled replication forks, which reloads the replicative helicase on sites other than the origin of replication; the PriA-PriB pathway is the major replication restart pathway. During primosome assembly it facilitates complex formation between PriA and DnaT on DNA; stabilizes PriA on DNA. Stimulates the DNA unwinding activity of PriA helicase. In Yersinia enterocolitica serotype O:8 / biotype 1B (strain NCTC 13174 / 8081), this protein is Replication restart protein PriB.